A 333-amino-acid chain; its full sequence is Protein FLAP1 homolog A (333 aa).

Residues 26–46 (VVIIFVLAFTLVFTPTFEAEA) traverse the membrane as a helical segment. The interval 53 to 74 (IGGGSFRAPSAPSRSYSGPSGG) is disordered. Low complexity predominate over residues 58-70 (FRAPSAPSRSYSG). The next 2 helical transmembrane spans lie at 92–112 (IIPF…LVMI) and 261–281 (GEYI…LPAV).

Belongs to the FLAP family.

It is found in the cellular thylakoid membrane. The protein resides in the cell inner membrane. Essential for photosynthetic growth under fluctuating light by modulating PxcA- and PxcL-dependent intracellular pH regulation via proton transport (e.g. transient pH reduction upon transition from dark to light followed by an increase in the light until light-to-dark shift). This chain is Protein FLAP1 homolog A, found in Synechocystis sp. (strain ATCC 27184 / PCC 6803 / Kazusa).